A 129-amino-acid chain; its full sequence is uncharacterized protein (129 aa).

Helical transmembrane passes span 49–69, 72–92, and 101–118; these read LWSLYSMMLHILGFLANIVGV, FTIFAFSPADIAVYHFFNLIF, and YFNCVILCTCVSVYNLLQ.

The protein resides in the membrane. This is an uncharacterized protein from Saccharomyces cerevisiae (strain ATCC 204508 / S288c) (Baker's yeast).